The chain runs to 305 residues: Fructose-bisphosphate aldolase (305 aa).

S49 is a D-glyceraldehyde 3-phosphate binding site. Catalysis depends on D80, which acts as the Proton donor. Positions 81, 102, 132, and 178 each coordinate Zn(2+). Position 179 (G179) interacts with dihydroxyacetone phosphate. Position 208 (H208) interacts with Zn(2+). Dihydroxyacetone phosphate-binding positions include G209–S211 and N251–T254.

The protein belongs to the class II fructose-bisphosphate aldolase family. Homotetramer. Zn(2+) serves as cofactor.

It catalyses the reaction beta-D-fructose 1,6-bisphosphate = D-glyceraldehyde 3-phosphate + dihydroxyacetone phosphate. It functions in the pathway carbohydrate degradation; glycolysis; D-glyceraldehyde 3-phosphate and glycerone phosphate from D-glucose: step 4/4. In terms of biological role, catalyzes the aldol condensation of dihydroxyacetone phosphate (DHAP or glycerone-phosphate) with glyceraldehyde 3-phosphate (G3P) to form fructose 1,6-bisphosphate (FBP) in gluconeogenesis and the reverse reaction in glycolysis. The protein is Fructose-bisphosphate aldolase of Thermus caldophilus.